The chain runs to 529 residues: T-complex protein 1 subunit beta (529 aa).

The protein belongs to the TCP-1 chaperonin family. As to quaternary structure, heterooligomeric complex of about 850 to 900 kDa that forms two stacked rings, 12 to 16 nm in diameter.

Its subcellular location is the cytoplasm. Functionally, molecular chaperone; assists the folding of proteins upon ATP hydrolysis. Known to play a role, in vitro, in the folding of actin and tubulin. This is T-complex protein 1 subunit beta (cct-2) from Caenorhabditis elegans.